We begin with the raw amino-acid sequence, 270 residues long: 3-methyl-2-oxobutanoate hydroxymethyltransferase (270 aa).

Residues Asp-41 and Asp-80 each coordinate Mg(2+). Residues Asp-41–Ser-42, Asp-80, and Lys-109 each bind 3-methyl-2-oxobutanoate. A Mg(2+)-binding site is contributed by Glu-111. Glu-178 acts as the Proton acceptor in catalysis.

The protein belongs to the PanB family. As to quaternary structure, homodecamer; pentamer of dimers. The cofactor is Mg(2+).

Its subcellular location is the cytoplasm. It catalyses the reaction 3-methyl-2-oxobutanoate + (6R)-5,10-methylene-5,6,7,8-tetrahydrofolate + H2O = 2-dehydropantoate + (6S)-5,6,7,8-tetrahydrofolate. Its pathway is cofactor biosynthesis; (R)-pantothenate biosynthesis; (R)-pantoate from 3-methyl-2-oxobutanoate: step 1/2. Catalyzes the reversible reaction in which hydroxymethyl group from 5,10-methylenetetrahydrofolate is transferred onto alpha-ketoisovalerate to form ketopantoate. In Thermotoga maritima (strain ATCC 43589 / DSM 3109 / JCM 10099 / NBRC 100826 / MSB8), this protein is 3-methyl-2-oxobutanoate hydroxymethyltransferase.